Reading from the N-terminus, the 606-residue chain is Zinc metalloproteinase-disintegrin-like HF3 (606 aa).

The signal sequence occupies residues 1-20; the sequence is MIQVLLVTICLAAFPYQGSS. Residues 21–190 constitute a propeptide that is removed on maturation; it reads IILESGNVND…KKASQLVVTA (170 aa). Residues 199-395 enclose the Peptidase M12B domain; sequence KYIELVILAD…YKPQCILNEP (197 aa). Ca(2+) is bound at residue Glu202. The N-linked (GlcNAc...) asparagine glycan is linked to Asn259. Residue Asp286 participates in Ca(2+) binding. 3 disulfides stabilise this stretch: Cys310–Cys390, Cys350–Cys374, and Cys352–Cys357. N-linked (GlcNAc...) asparagine glycosylation is present at Asn313. His335 contacts Zn(2+). Residue Glu336 is part of the active site. His339 and His345 together coordinate Zn(2+). Asn373 carries N-linked (GlcNAc...) asparagine glycosylation. Cys390, Asn393, Val405, Asn408, Leu410, Glu412, Glu415, and Asp418 together coordinate Ca(2+). A Disintegrin domain is found at 403–489; it reads PPVCGNELLE…DCPTDDFKRN (87 aa). 14 cysteine pairs are disulfide-bonded: Cys406/Cys435, Cys417/Cys430, Cys419/Cys425, Cys429/Cys452, Cys443/Cys449, Cys448/Cys474, Cys461/Cys481, Cys468/Cys500, Cys493/Cys505, Cys512/Cys562, Cys527/Cys569, Cys540/Cys550, Cys557/Cys594, and Cys588/Cys599. The D/ECD-tripeptide signature appears at 467–469; the sequence is ECD. 3 residues coordinate Ca(2+): Asp469, Glu472, and Asp484. Asn519 is a glycosylation site (N-linked (GlcNAc...) asparagine). Asn584 is a glycosylation site (N-linked (GlcNAc...) asparagine).

It belongs to the venom metalloproteinase (M12B) family. P-III subfamily. P-IIIa sub-subfamily. Monomer. Requires Zn(2+) as cofactor. Expressed by the venom gland.

The protein resides in the secreted. In terms of biological role, the metalloproteinase-disintegrin-like HF3 is a potent hemorrhagic toxin that activates macrophages for phagocytosis through integrin alpha-M/beta-2 (ITGAM/ITGB2). It inhibits collagen-induced platelet aggregation. This protein shows cleavage specificity for substrate for leucine at P1' position, followed by hydrophobic residues in P2'. The protein is Zinc metalloproteinase-disintegrin-like HF3 of Bothrops jararaca (Jararaca).